Here is a 1409-residue protein sequence, read N- to C-terminus: Receptor-type tyrosine-protein phosphatase (1409 aa).

An N-terminal signal peptide occupies residues 1–22; the sequence is MRINRWIWWATVILLYLRTGLA. Over 23–712 the chain is Extracellular; that stretch reads ADFFRSSEEN…LLDTESSSSG (690 aa). A disordered region spans residues 32-53; the sequence is NDRKSSDDLDNFNSTKIEPDKP. In terms of domain architecture, Ig-like C2-type spans 159–267; sequence PTKCDKRDLA…TASASDLDVT (109 aa). C189 and C255 are disulfide-bonded. Fibronectin type-III domains lie at 276–366 and 372–502; these read APRQ…TKQK and KEED…AQPD. The chain crosses the membrane as a helical span at residues 713–733; sequence FGIFMKIILPFLLFLAFATGV. The Cytoplasmic portion of the chain corresponds to 734–1409; the sequence is TMFFVNRKGH…LADYISKTYR (676 aa). Tyrosine-protein phosphatase domains are found at residues 793 to 1072 and 1135 to 1403; these read FAQE…LAEW and LEEE…LADY. Residues C1013 and C1344 each act as phosphocysteine intermediate in the active site.

Belongs to the protein-tyrosine phosphatase family. Receptor class 2A subfamily. Expressed in muscles, hypodermis and a subset of neurons. Expressed in the AVA neurons, with high expression in the anterior half of the preanal ganglion where AVA neurons contact the PHB neurons.

The protein resides in the cell membrane. The protein localises to the synapse. It catalyses the reaction O-phospho-L-tyrosyl-[protein] + H2O = L-tyrosyl-[protein] + phosphate. Its function is as follows. Possesses an intrinsic protein tyrosine phosphatase (PTPase) activity. Regulates egl-15 activity which is required for hypodermis-mediated fluid homeostasis and protein degradation in muscle. During the formation of neuromuscular junctions at the larval stage, negatively regulates membrane protrusion from body wall muscles. Plays a role in nicotinic acetylcholine receptor (nAChR)-mediated sensitivity to nicotine. Regulates synaptic levels of nAchR subunit lev-1 in the nerve cord. Promotes the outgrowth of the quaternary dendritic branches of the PVD sensory neurons. In parallel to the sax-7/mnr-1 pathway, also controls the extension of the PVD primary branches. Acts in the netrin/DCC pathway to mediate the formation of synapses between the AVA interneurons and the PHB sensory neurons. Also required for the formation of synapses between the AVA interneurons and the VA10 motor neurons. The chain is Receptor-type tyrosine-protein phosphatase from Caenorhabditis elegans.